A 102-amino-acid polypeptide reads, in one-letter code: Monothiol glutaredoxin-S9 (102 aa).

Positions 1-101 (MDKVVRMSSE…PLVKPFQANL (101 aa)) constitute a Glutaredoxin domain. Cysteine 21 contributes to the [2Fe-2S] cluster binding site.

This sequence belongs to the glutaredoxin family. CC-type subfamily.

It localises to the cytoplasm. Functionally, may only reduce GSH-thiol disulfides, but not protein disulfides. This Arabidopsis thaliana (Mouse-ear cress) protein is Monothiol glutaredoxin-S9 (GRXS9).